Here is a 795-residue protein sequence, read N- to C-terminus: Endoplasmin (795 aa).

A signal peptide spans 1–21 (MKSAWALALACTLLLAASVTA). The SRT pseudosubstrate motif signature appears at 41 to 43 (SRT). Residues asparagine 61 and asparagine 106 are each glycosylated (N-linked (GlcNAc...) asparagine). Asparagine 106, aspartate 148, asparagine 161, and phenylalanine 198 together coordinate ATP. N-linked (GlcNAc...) asparagine glycosylation is present at asparagine 216. A compositionally biased stretch (acidic residues) spans 289 to 316 (EEPVEEEEAKEEKEETDDNEAAVEEEEE). A disordered region spans residues 289–322 (EEPVEEEEAKEEKEETDDNEAAVEEEEEEKKPKT). N-linked (GlcNAc...) asparagine glycosylation is found at asparagine 444, asparagine 480, and asparagine 501. The segment at 751–795 (DAKVEEEPEEPEDAAEEAEQDEEEVDADAEDSETQKESTDVKDEL) is disordered. A compositionally biased stretch (acidic residues) spans 756-782 (EEPEEPEDAAEEAEQDEEEVDADAEDS). Residues 783 to 795 (ETQKESTDVKDEL) show a composition bias toward basic and acidic residues. The Prevents secretion from ER signature appears at 792–795 (KDEL).

This sequence belongs to the heat shock protein 90 family. As to quaternary structure, homodimer; disulfide-linked.

It is found in the endoplasmic reticulum lumen. The protein localises to the sarcoplasmic reticulum lumen. The catalysed reaction is ATP + H2O = ADP + phosphate + H(+). ATP-dependent chaperone involved in the processing of proteins in the endoplasmic reticulum, regulating their transport. This is Endoplasmin (HSP90B1) from Gallus gallus (Chicken).